The chain runs to 426 residues: Cell cycle checkpoint control protein RAD9B (426 aa).

Position 359 is a phosphoserine (S359).

It belongs to the rad9 family. As to quaternary structure, interacts with HUS1, HUS1B, RAD1, RAD9A and RAD17. In terms of tissue distribution, expressed in testis and skeletal muscle.

The chain is Cell cycle checkpoint control protein RAD9B (RAD9B) from Homo sapiens (Human).